The chain runs to 350 residues: Heat-inducible transcription repressor HrcA (350 aa).

The protein belongs to the HrcA family.

Functionally, negative regulator of class I heat shock genes (grpE-dnaK-dnaJ and groELS operons). Prevents heat-shock induction of these operons. The sequence is that of Heat-inducible transcription repressor HrcA from Methylococcus capsulatus (strain ATCC 33009 / NCIMB 11132 / Bath).